Reading from the N-terminus, the 309-residue chain is MESNQYGHVTVLLAEAVEALGVKADGLYIDGTFGRGGHSAEILKALGPQGRLLGIDKDPRARRTAMERFSGDDRFLFRQGSFADMASFVSELQWPGVDGVLLDLGVSSPQLDEAERGFSFMQDGPLDMRMDPDSGLSASEWVNTAKEEEISKVLWDLGEERFARRMAKAIVAARQTQPITRTLQLAEIVAAANPRWEKGKNPATRAFQAIRIFINRELDDLAQGLEQAFGVLKPGGRLTVISFHSLEDRMVKQYMRDIVRGPKTPKWLPVVDDAPPKAKLVGKKIRAGETEVVANVRARSAVMRVLEKC.

Residues 36–38, aspartate 56, phenylalanine 82, aspartate 103, and glutamine 110 contribute to the S-adenosyl-L-methionine site; that span reads GGH.

It belongs to the methyltransferase superfamily. RsmH family.

It is found in the cytoplasm. It catalyses the reaction cytidine(1402) in 16S rRNA + S-adenosyl-L-methionine = N(4)-methylcytidine(1402) in 16S rRNA + S-adenosyl-L-homocysteine + H(+). Specifically methylates the N4 position of cytidine in position 1402 (C1402) of 16S rRNA. This Hahella chejuensis (strain KCTC 2396) protein is Ribosomal RNA small subunit methyltransferase H.